We begin with the raw amino-acid sequence, 142 residues long: Deoxyuridine 5'-triphosphate nucleotidohydrolase (142 aa).

Substrate-binding positions include 62–64, Asn-75, and 79–81; these read RSG and TID.

The protein belongs to the dUTPase family. Requires Mg(2+) as cofactor.

The enzyme catalyses dUTP + H2O = dUMP + diphosphate + H(+). The protein operates within pyrimidine metabolism; dUMP biosynthesis; dUMP from dCTP (dUTP route): step 2/2. Its function is as follows. This enzyme is involved in nucleotide metabolism: it produces dUMP, the immediate precursor of thymidine nucleotides and it decreases the intracellular concentration of dUTP so that uracil cannot be incorporated into DNA. The polypeptide is Deoxyuridine 5'-triphosphate nucleotidohydrolase (Picosynechococcus sp. (strain ATCC 27264 / PCC 7002 / PR-6) (Agmenellum quadruplicatum)).